The sequence spans 638 residues: Threonine--tRNA ligase (638 aa).

Residues 1–61 form the TGS domain; that stretch reads MPKITLPDGT…KNDSKVVIIT (61 aa). The segment at 242 to 533 is catalytic; the sequence is DHRKLGKKHS…LIEQYEAKFP (292 aa). Residues cysteine 333, histidine 384, and histidine 510 each contribute to the Zn(2+) site.

The protein belongs to the class-II aminoacyl-tRNA synthetase family. In terms of assembly, homodimer. Zn(2+) is required as a cofactor.

Its subcellular location is the cytoplasm. The catalysed reaction is tRNA(Thr) + L-threonine + ATP = L-threonyl-tRNA(Thr) + AMP + diphosphate + H(+). Catalyzes the attachment of threonine to tRNA(Thr) in a two-step reaction: L-threonine is first activated by ATP to form Thr-AMP and then transferred to the acceptor end of tRNA(Thr). Also edits incorrectly charged L-seryl-tRNA(Thr). The polypeptide is Threonine--tRNA ligase (Prochlorococcus marinus (strain MIT 9515)).